Reading from the N-terminus, the 381-residue chain is Succinyl-diaminopimelate desuccinylase (381 aa).

H72 lines the Zn(2+) pocket. D74 is a catalytic residue. A Zn(2+)-binding site is contributed by D105. E139 functions as the Proton acceptor in the catalytic mechanism. Zn(2+) is bound by residues E140, E168, and H354.

The protein belongs to the peptidase M20A family. DapE subfamily. As to quaternary structure, homodimer. The cofactor is Zn(2+). Co(2+) is required as a cofactor.

The catalysed reaction is N-succinyl-(2S,6S)-2,6-diaminopimelate + H2O = (2S,6S)-2,6-diaminopimelate + succinate. The protein operates within amino-acid biosynthesis; L-lysine biosynthesis via DAP pathway; LL-2,6-diaminopimelate from (S)-tetrahydrodipicolinate (succinylase route): step 3/3. Functionally, catalyzes the hydrolysis of N-succinyl-L,L-diaminopimelic acid (SDAP), forming succinate and LL-2,6-diaminopimelate (DAP), an intermediate involved in the bacterial biosynthesis of lysine and meso-diaminopimelic acid, an essential component of bacterial cell walls. The protein is Succinyl-diaminopimelate desuccinylase of Shewanella sp. (strain MR-4).